The following is a 91-amino-acid chain: DNA-directed RNA polymerase subunit omega (91 aa).

Belongs to the RNA polymerase subunit omega family. In terms of assembly, the RNAP catalytic core consists of 2 alpha, 1 beta, 1 beta' and 1 omega subunit. When a sigma factor is associated with the core the holoenzyme is formed, which can initiate transcription.

The enzyme catalyses RNA(n) + a ribonucleoside 5'-triphosphate = RNA(n+1) + diphosphate. Its function is as follows. Promotes RNA polymerase assembly. Latches the N- and C-terminal regions of the beta' subunit thereby facilitating its interaction with the beta and alpha subunits. The chain is DNA-directed RNA polymerase subunit omega from Proteus mirabilis (strain HI4320).